Reading from the N-terminus, the 179-residue chain is Large ribosomal subunit protein uL6 (179 aa).

Belongs to the universal ribosomal protein uL6 family. As to quaternary structure, part of the 50S ribosomal subunit.

Functionally, this protein binds to the 23S rRNA, and is important in its secondary structure. It is located near the subunit interface in the base of the L7/L12 stalk, and near the tRNA binding site of the peptidyltransferase center. This is Large ribosomal subunit protein uL6 from Persephonella marina (strain DSM 14350 / EX-H1).